Here is a 162-residue protein sequence, read N- to C-terminus: ATP synthase subunit b (162 aa).

A helical transmembrane segment spans residues 4–24; sequence INWGSIIYQLIAFCVLLWLLS.

The protein belongs to the ATPase B chain family. As to quaternary structure, F-type ATPases have 2 components, F(1) - the catalytic core - and F(0) - the membrane proton channel. F(1) has five subunits: alpha(3), beta(3), gamma(1), delta(1), epsilon(1). F(0) has three main subunits: a(1), b(2) and c(10-14). The alpha and beta chains form an alternating ring which encloses part of the gamma chain. F(1) is attached to F(0) by a central stalk formed by the gamma and epsilon chains, while a peripheral stalk is formed by the delta and b chains.

The protein resides in the cell membrane. Its function is as follows. F(1)F(0) ATP synthase produces ATP from ADP in the presence of a proton or sodium gradient. F-type ATPases consist of two structural domains, F(1) containing the extramembraneous catalytic core and F(0) containing the membrane proton channel, linked together by a central stalk and a peripheral stalk. During catalysis, ATP synthesis in the catalytic domain of F(1) is coupled via a rotary mechanism of the central stalk subunits to proton translocation. Functionally, component of the F(0) channel, it forms part of the peripheral stalk, linking F(1) to F(0). The sequence is that of ATP synthase subunit b from Halalkalibacterium halodurans (strain ATCC BAA-125 / DSM 18197 / FERM 7344 / JCM 9153 / C-125) (Bacillus halodurans).